Reading from the N-terminus, the 282-residue chain is Acetyl-coenzyme A carboxylase carboxyl transferase subunit beta (282 aa).

Residues 23–282 enclose the CoA carboxyltransferase N-terminal domain; sequence IWTKCGQCDA…MLSKLHHQQA (260 aa). Zn(2+) is bound by residues Cys-27, Cys-30, Cys-46, and Cys-49. The C4-type zinc finger occupies 27-49; sequence CGQCDAVLYKTELEKQLGVCPKC.

It belongs to the AccD/PCCB family. As to quaternary structure, acetyl-CoA carboxylase is a heterohexamer composed of biotin carboxyl carrier protein (AccB), biotin carboxylase (AccC) and two subunits each of ACCase subunit alpha (AccA) and ACCase subunit beta (AccD). Requires Zn(2+) as cofactor.

Its subcellular location is the cytoplasm. The enzyme catalyses N(6)-carboxybiotinyl-L-lysyl-[protein] + acetyl-CoA = N(6)-biotinyl-L-lysyl-[protein] + malonyl-CoA. It participates in lipid metabolism; malonyl-CoA biosynthesis; malonyl-CoA from acetyl-CoA: step 1/1. Functionally, component of the acetyl coenzyme A carboxylase (ACC) complex. Biotin carboxylase (BC) catalyzes the carboxylation of biotin on its carrier protein (BCCP) and then the CO(2) group is transferred by the transcarboxylase to acetyl-CoA to form malonyl-CoA. The protein is Acetyl-coenzyme A carboxylase carboxyl transferase subunit beta of Pseudoalteromonas atlantica (strain T6c / ATCC BAA-1087).